Here is a 666-residue protein sequence, read N- to C-terminus: MTKDIIAESVQNDLRYLQLLARSFPTIADASTEIINLEAILNLPKGTEHFLSDLHGEDQAFSHVLRNASGAVKRKVNEIFSNTLRESEKKELCSLIYYPEDKLELIKSQEQDLEDWYQVTLNQLVRVCRNVSSKYTRSKVRKALPKEFSYIIQELLHESSVEPNKSAYVDQIICTIISTGRADDFIIAMCNLIQRLTIDLLHIIGDIYDRGPGAHLIMDILCDYHNFDVQWGNHDILWMGAASGNLVSIANVIRMCLRFGNMATLEDGYGINLLPLATFAMEAYGDDPCALFMPKTKFADNAMDEKTTRLIAQMHKAITIIQFKLEGEIIRRRPEFEMDDRMLLHHIDLKRGVVHIDGKDYTLKDTNWPTLDPKDPYRLSIEEEDLIRKILHSFESSEKMKKHMRCFFRHGGMYQVCNSNLLFHASIPMNPDGTFKSVRILGQDYKGRALLDRVDQLIRTAYFKTGEQEEVEYAHDYIWYLWGGKDSPLFDKSKMATFERAFIEEAETHKEEKGAYYTLREQEEICDKILDEFGVTGMHRHIINGHVPVRSNQGENPIKANGKMLVIDGGFSRPYHLETGIAGYTLVYHSRGFQLVQHEPFESRAKAIEEGLDIKSTTIVVELSSHRQMVKDTDKGADLQSQIKDLEKLLYAYRNGLIKEKERMER.

This sequence belongs to the FBPase class 3 family. Mn(2+) is required as a cofactor.

It carries out the reaction beta-D-fructose 1,6-bisphosphate + H2O = beta-D-fructose 6-phosphate + phosphate. Its pathway is carbohydrate biosynthesis; gluconeogenesis. The polypeptide is Fructose-1,6-bisphosphatase class 3 (Parabacteroides distasonis (strain ATCC 8503 / DSM 20701 / CIP 104284 / JCM 5825 / NCTC 11152)).